Reading from the N-terminus, the 329-residue chain is Bile salt hydrolase/transferase (329 aa).

The Nucleophile; acyl-thioester intermediate role is filled by cysteine 2. Residues cysteine 2 and arginine 18 each contribute to the deoxycholate site. Asparagine 82 is a taurine binding site.

Belongs to the peptidase C59 family. Homotetramer. The tetramer consists of a dimer of dimers.

The catalysed reaction is glycocholate + H2O = cholate + glycine. The enzyme catalyses cholate + taurine = taurocholate + H2O. It carries out the reaction taurodeoxycholate + H2O = deoxycholate + taurine. It catalyses the reaction glycodeoxycholate + H2O = deoxycholate + glycine. The catalysed reaction is chenodeoxycholate + glycine = glycochenodeoxycholate + H2O. The enzyme catalyses taurochenodeoxycholate + H2O = chenodeoxycholate + taurine. It carries out the reaction an L-alpha-amino acid + cholate = an N-choloyl-L-alpha-amino acid + H2O. It catalyses the reaction an L-alpha-amino acid + taurocholate = an N-choloyl-L-alpha-amino acid + taurine. The catalysed reaction is glycocholate + an L-alpha-amino acid = an N-choloyl-L-alpha-amino acid + glycine. The enzyme catalyses cholate + L-histidine = L-histidocholate + H2O. It carries out the reaction taurocholate + L-histidine = L-histidocholate + taurine. It catalyses the reaction glycocholate + L-histidine = L-histidocholate + glycine. The catalysed reaction is cholate + L-arginine = L-arginocholate + H2O. The enzyme catalyses taurocholate + L-arginine = L-arginocholate + taurine. It carries out the reaction glycocholate + L-arginine = L-arginocholate + glycine. It catalyses the reaction cholate + L-phenylalanine = L-phenylalanocholate + H2O. The catalysed reaction is taurocholate + L-phenylalanine = L-phenylalanocholate + taurine. It participates in lipid metabolism; bile acid biosynthesis. Possesses dual functions in bile acid metabolism. Acts as a bile salt hydrolase that catalyzes the deconjugation of glycine- and taurine-linked bile salts, which occurs naturally in the intestines of humans, releasing amino acid residues and deconjugated bile salts (bile acids). Can hydrolyze the amide bond in major human conjugated bile salts, such as glycocholate (GCA), taurocholate (TCA) and taurodeoxycholate (TDCA). Shows a slight preference for taurine-conjugated bile acids as substrates. Also acts as an amine N-acyltransferase that conjugates a wide variety of amino acids to conjugated and non-conjugated bile acids, thus producing bacterial bile acid amidates (BBAAs) - also named microbially conjugated bile acids (MCBAs) - in the gastrointestinal tract. These BBAAs may facilitate communication between the microbiota and host through the activation of human ligand-activated transcription factors. The chain is Bile salt hydrolase/transferase (cbh) from Clostridium perfringens (strain 13 / Type A).